The primary structure comprises 151 residues: U-scoloptoxin(17)-Er2a (151 aa).

The first 22 residues, 1–22 (MKSFFVVFAIVFQATLVALSLA), serve as a signal peptide directing secretion.

The protein belongs to the scoloptoxin-17 family. Post-translationally, contains 5 disulfide bonds. Expressed by the venom gland.

It localises to the secreted. In Ethmostigmus rubripes (Giant centipede), this protein is U-scoloptoxin(17)-Er2a.